We begin with the raw amino-acid sequence, 84 residues long: Large ribosomal subunit protein bL31B (84 aa).

The protein belongs to the bacterial ribosomal protein bL31 family. Type B subfamily. As to quaternary structure, part of the 50S ribosomal subunit.

This chain is Large ribosomal subunit protein bL31B, found in Parabacteroides distasonis (strain ATCC 8503 / DSM 20701 / CIP 104284 / JCM 5825 / NCTC 11152).